The primary structure comprises 463 residues: Succinate--CoA ligase [ADP-forming] subunit beta, mitochondrial (463 aa).

The transit peptide at 1–52 (MAASMFYGRLVAVATLRNHRPRTAQRAAAQVLGSSGLFNNHGLQVQQQQQRN) directs the protein to the mitochondrion. Residues 61-288 (MELLQEAGVS…SNSAYRQKKI (228 aa)) form the ATP-grasp domain. At lysine 78 the chain carries N6-acetyllysine. Tyrosine 84 carries the phosphotyrosine modification. The residue at position 88 (lysine 88) is an N6-acetyllysine; alternate. An N6-succinyllysine; alternate modification is found at lysine 88. Residues lysine 98 and 105 to 107 (GRG) contribute to the ATP site. N6-acetyllysine is present on residues lysine 129, lysine 139, lysine 143, and lysine 216. Asparagine 258 and aspartate 272 together coordinate Mg(2+). At serine 279 the chain carries Phosphoserine. A substrate-binding site is contributed by asparagine 323. Threonine 341 bears the Phosphothreonine mark. Lysine 368 is subject to N6-acetyllysine. 380–382 (GIM) contacts substrate.

Belongs to the succinate/malate CoA ligase beta subunit family. ATP-specific subunit beta subfamily. Heterodimer of an alpha and a beta subunit. The beta subunit determines specificity for ATP. Interacts with ALAS2. The cofactor is Mg(2+). In terms of tissue distribution, widely expressed. Not expressed in liver and lung.

The protein resides in the mitochondrion. The catalysed reaction is succinate + ATP + CoA = succinyl-CoA + ADP + phosphate. The protein operates within carbohydrate metabolism; tricarboxylic acid cycle; succinate from succinyl-CoA (ligase route): step 1/1. Inhibited by itaconate. ATP-specific succinyl-CoA synthetase functions in the citric acid cycle (TCA), coupling the hydrolysis of succinyl-CoA to the synthesis of ATP and thus represents the only step of substrate-level phosphorylation in the TCA. The beta subunit provides nucleotide specificity of the enzyme and binds the substrate succinate, while the binding sites for coenzyme A and phosphate are found in the alpha subunit. The sequence is that of Succinate--CoA ligase [ADP-forming] subunit beta, mitochondrial from Homo sapiens (Human).